We begin with the raw amino-acid sequence, 286 residues long: Pantothenate synthetase (286 aa).

ATP is bound at residue 30 to 37 (MGCFHQGH). Histidine 37 serves as the catalytic Proton donor. Glutamine 61 lines the (R)-pantoate pocket. Position 61 (glutamine 61) interacts with beta-alanine. 147-150 (GEKD) serves as a coordination point for ATP. Glutamine 153 is a (R)-pantoate binding site. 184–187 (MSSR) contributes to the ATP binding site.

Belongs to the pantothenate synthetase family. As to quaternary structure, homodimer.

It is found in the cytoplasm. It catalyses the reaction (R)-pantoate + beta-alanine + ATP = (R)-pantothenate + AMP + diphosphate + H(+). The protein operates within cofactor biosynthesis; (R)-pantothenate biosynthesis; (R)-pantothenate from (R)-pantoate and beta-alanine: step 1/1. Catalyzes the condensation of pantoate with beta-alanine in an ATP-dependent reaction via a pantoyl-adenylate intermediate. The chain is Pantothenate synthetase from Desulfotalea psychrophila (strain LSv54 / DSM 12343).